The sequence spans 137 residues: Ribonuclease VapC27 (137 aa).

Positions 7–125 (VDTSVAIPLL…ATRDARAKDT (119 aa)) constitute a PINc domain. Residues D8 and D101 each coordinate Mg(2+).

The protein belongs to the PINc/VapC protein family. In terms of assembly, interacts with cognate antitoxin VapB27. It depends on Mg(2+) as a cofactor.

The protein localises to the secreted. Probably the toxic component of a type II toxin-antitoxin (TA) system. An RNase. Its cognate antitoxin is VapB27. The polypeptide is Ribonuclease VapC27 (Mycobacterium tuberculosis (strain ATCC 25618 / H37Rv)).